The following is a 359-amino-acid chain: Type-1 angiotensin II receptor (359 aa).

Residues 1-25 (MMLNSSTEDGIKRIQDDCPKAGRHN) are Extracellular-facing. N4 carries N-linked (GlcNAc...) asparagine glycosylation. Residues Q15 and D17 each coordinate angiotensin II. 2 disulfide bridges follow: C18–C274 and C101–C180. Residues 26 to 55 (YIFVMIPTLYSIIFVVGIFGNSLAVIVIYF) traverse the membrane as a helical segment. The Cytoplasmic portion of the chain corresponds to 56-61 (YMKLKT). The chain crosses the membrane as a helical span at residues 62-89 (VASVFLLNLALADLCFLLTLPLWAVYTA). The Extracellular portion of the chain corresponds to 90 to 98 (MEYRWPFGN). The helical transmembrane segment at 99–125 (YLCKIASASVSFNLYASVFLLTCLSID) threads the bilayer. Residues 126–141 (RYLAIVHPMKSRLRRT) are Cytoplasmic-facing. Residues 142–165 (MLVAKVTCIIIWLLAGLASLPAII) form a helical membrane-spanning segment. Residues 166 to 190 (HRNVFFIENTNITVCAFHYESQNST) are Extracellular-facing. R167 serves as a coordination point for angiotensin II. Residue N176 is glycosylated (N-linked (GlcNAc...) asparagine). Angiotensin II contacts are provided by F182, H183, and Y184. The N-linked (GlcNAc...) asparagine glycan is linked to N188. Residues 191–216 (LPIGLGLTKNILGFLFPFLIILTSYT) form a helical membrane-spanning segment. K199 contributes to the angiotensin II binding site. At 217–239 (LIWKALKKAYEIQKNKPRNDDIF) the chain is on the cytoplasmic side. A helical transmembrane segment spans residues 240–268 (KIIMAIVLFFFFSWVPHQIFTFLDVLIQL). The Extracellular segment spans residues 269–278 (GVIHDCRIAD). The chain crosses the membrane as a helical span at residues 279 to 304 (IVDTAMPITICIAYFNNCLNPLFYGF). Topologically, residues 305 to 359 (LGKKFKKYFLQLLKYIPPKAKSHSNLSTKMSTLSYRPSDNVSSSSKKPVPCFEVE) are cytoplasmic. A compositionally biased stretch (polar residues) spans 335–350 (STLSYRPSDNVSSSSK). The disordered stretch occupies residues 335 to 359 (STLSYRPSDNVSSSSKKPVPCFEVE). C355 carries S-palmitoyl cysteine lipidation.

Belongs to the G-protein coupled receptor 1 family. Interacts with MAS1. Interacts with ARRB1. Interacts with FLNA (via filamin repeat 21); increases PKA-mediated phosphorylation of FLNA. In terms of processing, C-terminal Ser or Thr residues may be phosphorylated.

It is found in the cell membrane. Functionally, receptor for angiotensin II, a vasoconstricting peptide, which acts as a key regulator of blood pressure and sodium retention by the kidney. The activated receptor in turn couples to G-alpha proteins G(q) (GNAQ, GNA11, GNA14 or GNA15) and thus activates phospholipase C and increases the cytosolic Ca(2+) concentrations, which in turn triggers cellular responses such as stimulation of protein kinase C. The chain is Type-1 angiotensin II receptor (AGTR1) from Oryctolagus cuniculus (Rabbit).